Here is a 54-residue protein sequence, read N- to C-terminus: Insulin (54 aa).

Disulfide bonds link Cys7/Cys39, Cys19/Cys52, and Cys38/Cys43.

It belongs to the insulin family. Heterodimer of a B chain and an A chain linked by two disulfide bonds.

It localises to the secreted. In terms of biological role, insulin decreases blood glucose concentration. It increases cell permeability to monosaccharides, amino acids and fatty acids. It accelerates glycolysis, the pentose phosphate cycle, and glycogen synthesis in liver. In Squalus acanthias (Spiny dogfish), this protein is Insulin (ins).